A 111-amino-acid chain; its full sequence is Ribosome-binding factor A (111 aa).

Belongs to the RbfA family. In terms of assembly, monomer. Binds 30S ribosomal subunits, but not 50S ribosomal subunits or 70S ribosomes.

The protein resides in the cytoplasm. Its function is as follows. One of several proteins that assist in the late maturation steps of the functional core of the 30S ribosomal subunit. Associates with free 30S ribosomal subunits (but not with 30S subunits that are part of 70S ribosomes or polysomes). Required for efficient processing of 16S rRNA. May interact with the 5'-terminal helix region of 16S rRNA. The chain is Ribosome-binding factor A from Helicobacter pylori (strain ATCC 700392 / 26695) (Campylobacter pylori).